The following is a 346-amino-acid chain: UPF0283 membrane protein VP1870 (346 aa).

A disordered region spans residues 1-30; the sequence is MSELKQKQIFSEKALEKEQQSDSPELTAQK. Polar residues predominate over residues 21–30; sequence SDSPELTAQK. 2 helical membrane passes run 73–93 and 98–118; these read VFAT…VTAV and WLAL…LGAI.

The protein belongs to the UPF0283 family.

Its subcellular location is the cell inner membrane. This chain is UPF0283 membrane protein VP1870, found in Vibrio parahaemolyticus serotype O3:K6 (strain RIMD 2210633).